A 358-amino-acid chain; its full sequence is Probable dual-specificity RNA methyltransferase RlmN 2 (358 aa).

The Proton acceptor role is filled by Glu90. The Radical SAM core domain maps to 96–328; sequence SGIRRTVCVS…VNTCRYTKGD (233 aa). Residues Cys103 and Cys334 are joined by a disulfide bond. Residues Cys110, Cys114, and Cys117 each coordinate [4Fe-4S] cluster. S-adenosyl-L-methionine is bound by residues 160-161, Ser192, 215-217, and Asn291; these read GE and SLH. Residue Cys334 is the S-methylcysteine intermediate of the active site.

The protein belongs to the radical SAM superfamily. RlmN family. The cofactor is [4Fe-4S] cluster.

It localises to the cytoplasm. The enzyme catalyses adenosine(2503) in 23S rRNA + 2 reduced [2Fe-2S]-[ferredoxin] + 2 S-adenosyl-L-methionine = 2-methyladenosine(2503) in 23S rRNA + 5'-deoxyadenosine + L-methionine + 2 oxidized [2Fe-2S]-[ferredoxin] + S-adenosyl-L-homocysteine. It carries out the reaction adenosine(37) in tRNA + 2 reduced [2Fe-2S]-[ferredoxin] + 2 S-adenosyl-L-methionine = 2-methyladenosine(37) in tRNA + 5'-deoxyadenosine + L-methionine + 2 oxidized [2Fe-2S]-[ferredoxin] + S-adenosyl-L-homocysteine. Specifically methylates position 2 of adenine 2503 in 23S rRNA and position 2 of adenine 37 in tRNAs. The chain is Probable dual-specificity RNA methyltransferase RlmN 2 from Protochlamydia amoebophila (strain UWE25).